We begin with the raw amino-acid sequence, 212 residues long: Probable nicotinate-nucleotide adenylyltransferase (212 aa).

It belongs to the NadD family.

The catalysed reaction is nicotinate beta-D-ribonucleotide + ATP + H(+) = deamido-NAD(+) + diphosphate. The protein operates within cofactor biosynthesis; NAD(+) biosynthesis; deamido-NAD(+) from nicotinate D-ribonucleotide: step 1/1. Catalyzes the reversible adenylation of nicotinate mononucleotide (NaMN) to nicotinic acid adenine dinucleotide (NaAD). The protein is Probable nicotinate-nucleotide adenylyltransferase of Shewanella sp. (strain MR-7).